The primary structure comprises 94 residues: Co-chaperonin GroES (94 aa).

This sequence belongs to the GroES chaperonin family. As to quaternary structure, heptamer of 7 subunits arranged in a ring. Interacts with the chaperonin GroEL.

The protein localises to the cytoplasm. Its function is as follows. Together with the chaperonin GroEL, plays an essential role in assisting protein folding. The GroEL-GroES system forms a nano-cage that allows encapsulation of the non-native substrate proteins and provides a physical environment optimized to promote and accelerate protein folding. GroES binds to the apical surface of the GroEL ring, thereby capping the opening of the GroEL channel. The protein is Co-chaperonin GroES of Bacillus sp. (strain PS3).